The primary structure comprises 403 residues: MMTKLDPYFGEYGGMFVPQILMPALKQLEAAFVDAQNDPSFQAEFTDLLKNYAGRPTALTLTRNLSPNPLVKIYLKREDLLHGGAHKTNQVLGQALLAKRMGKKEIIAETGAGQHGVATALACALLGLKCKVYMGAKDVERQSPNVFRMRLMGAEVIPVTSGSATLKDACNEAMRDWSASYDKAHYLLGTAAGPHPFPTIVREFQRMIGEETKAQILEREGRLPDAVIACVGGGSNAIGMFADFIDEPSVKLIGVEPAGLGIDTPKHGAPLKHGKTGIFFGMKAPLMQDKEGQIEESYSISAGLDFPSVGPQHAHLAATGRATYESATDDEALAAFQLLARSEGIIPALESAHALAYAIKLAEAATEETLLVVNLSGRGDKDIFTVADILEKQQANNEESGNE.

N6-(pyridoxal phosphate)lysine is present on lysine 87.

This sequence belongs to the TrpB family. In terms of assembly, tetramer of two alpha and two beta chains. Pyridoxal 5'-phosphate is required as a cofactor.

The catalysed reaction is (1S,2R)-1-C-(indol-3-yl)glycerol 3-phosphate + L-serine = D-glyceraldehyde 3-phosphate + L-tryptophan + H2O. The protein operates within amino-acid biosynthesis; L-tryptophan biosynthesis; L-tryptophan from chorismate: step 5/5. Functionally, the beta subunit is responsible for the synthesis of L-tryptophan from indole and L-serine. This Shewanella loihica (strain ATCC BAA-1088 / PV-4) protein is Tryptophan synthase beta chain.